Consider the following 255-residue polypeptide: uncharacterized protein (255 aa).

Residues 3-58 (PVERRQIILEMVAEKGIVSIAELTDRMNVSHMTIRRDLQKLEQQGAVVLVSGGVQS) form the HTH deoR-type domain. A DNA-binding region (H-T-H motif) is located at residues 20–39 (VSIAELTDRMNVSHMTIRRD).

This is an uncharacterized protein from Escherichia coli (strain K12).